The following is a 464-amino-acid chain: Protein transport protein HofB homolog (464 aa).

Residue 264-271 (GPTGSGKS) coordinates ATP.

This sequence belongs to the GSP E family.

The chain is Protein transport protein HofB homolog (hofB) from Haemophilus influenzae (strain ATCC 51907 / DSM 11121 / KW20 / Rd).